The chain runs to 106 residues: Probable insulin-like peptide beta-type 1 (106 aa).

The N-terminal stretch at 1–19 (MFSFFTYFLLSALLLSASC) is a signal peptide. Residues 20–51 (RQPSMDTSKADRILREIEMETELENQLSRARR) constitute a propeptide, removed; by convertase egl-3. 4 disulfides stabilise this stretch: C60/C89, C72/C102, C76/C103, and C88/C93.

Belongs to the insulin family. In terms of tissue distribution, expressed by ASI and ASJ sensory neurons and weakly by ventral cord motor neurons.

The protein resides in the secreted. Probable insulin-like peptide which negatively regulates synapse development at the neuromuscular junctions. Probably acts as a daf-2/InsR agonist ligand to prevent dauer formation under optimal environmental conditions. The protein is Probable insulin-like peptide beta-type 1 (ins-4) of Caenorhabditis elegans.